The chain runs to 316 residues: BTB/POZ domain-containing adapter for CUL3-mediated RhoA degradation protein 2 (316 aa).

The region spanning 28–96 (KYVQLNVGGS…LRDDTVTLPQ (69 aa)) is the BTB domain. The segment covering 268-279 (EATSRSRSQASP) has biased composition (polar residues). The disordered stretch occupies residues 268–287 (EATSRSRSQASPSEDEDTFE). At S278 the chain carries Phosphoserine. Position 280 is a phosphoserine; by CK2 (S280).

The protein belongs to the BACURD family. As to quaternary structure, component of the BCR(TNFAIP1) E3 ubiquitin ligase complex, at least composed of CUL3, TNFAIP1/BACURD2 and RBX1. Interacts with RHOA; with a preference for RhoA-GDP. Interacts with RHOB. Interacts with CSNK2B. Interacts with PCNA. In terms of processing, phosphorylation at Ser-280 by CK2 facilitates the nucleus localization and increases interaction with PCNA.

The protein localises to the cytoplasm. It is found in the nucleus. The protein resides in the endosome. It functions in the pathway protein modification; protein ubiquitination. Functionally, substrate-specific adapter of a BCR (BTB-CUL3-RBX1) E3 ubiquitin-protein ligase complex involved in regulation of cytoskeleton structure. The BCR(TNFAIP1) E3 ubiquitin ligase complex mediates the ubiquitination of RHOA, leading to its degradation by the proteasome, thereby regulating the actin cytoskeleton and cell migration. Its interaction with RHOB may regulate apoptosis. May enhance the PCNA-dependent DNA polymerase delta activity. The polypeptide is BTB/POZ domain-containing adapter for CUL3-mediated RhoA degradation protein 2 (Tnfaip1) (Rattus norvegicus (Rat)).